The chain runs to 365 residues: Ribosomal RNA large subunit methyltransferase F (365 aa).

The tract at residues 1–49 (MSKPAVKSVQSATAKTATRAVNIRQKVKAPKQAKPEAKGRVRPSKDKPR) is disordered. Residues 33 to 49 (AKPEAKGRVRPSKDKPR) are compositionally biased toward basic and acidic residues.

This sequence belongs to the methyltransferase superfamily. METTL16/RlmF family.

It is found in the cytoplasm. The catalysed reaction is adenosine(1618) in 23S rRNA + S-adenosyl-L-methionine = N(6)-methyladenosine(1618) in 23S rRNA + S-adenosyl-L-homocysteine + H(+). In terms of biological role, specifically methylates the adenine in position 1618 of 23S rRNA. The sequence is that of Ribosomal RNA large subunit methyltransferase F from Shewanella baltica (strain OS185).